Consider the following 340-residue polypeptide: GTP 3',8-cyclase (340 aa).

The Radical SAM core domain maps to lysine 8–glutamate 227. Arginine 17 provides a ligand contact to GTP. The [4Fe-4S] cluster site is built by cysteine 24 and cysteine 28. Tyrosine 30 is an S-adenosyl-L-methionine binding site. Cysteine 31 is a [4Fe-4S] cluster binding site. Arginine 71 contacts GTP. Glycine 75 serves as a coordination point for S-adenosyl-L-methionine. Threonine 102 lines the GTP pocket. Residue serine 126 participates in S-adenosyl-L-methionine binding. Lysine 163 contributes to the GTP binding site. Methionine 197 contacts S-adenosyl-L-methionine. The [4Fe-4S] cluster site is built by cysteine 261 and cysteine 264. Arginine 266–arginine 268 lines the GTP pocket. Residue cysteine 278 participates in [4Fe-4S] cluster binding.

The protein belongs to the radical SAM superfamily. MoaA family. In terms of assembly, monomer and homodimer. It depends on [4Fe-4S] cluster as a cofactor.

It catalyses the reaction GTP + AH2 + S-adenosyl-L-methionine = (8S)-3',8-cyclo-7,8-dihydroguanosine 5'-triphosphate + 5'-deoxyadenosine + L-methionine + A + H(+). The protein operates within cofactor biosynthesis; molybdopterin biosynthesis. Its function is as follows. Catalyzes the cyclization of GTP to (8S)-3',8-cyclo-7,8-dihydroguanosine 5'-triphosphate. The protein is GTP 3',8-cyclase of Staphylococcus haemolyticus (strain JCSC1435).